Here is a 334-residue protein sequence, read N- to C-terminus: Glycerol-3-phosphate dehydrogenase [NAD(P)+] (334 aa).

NADPH-binding residues include tryptophan 13, arginine 33, and lysine 106. 3 residues coordinate sn-glycerol 3-phosphate: lysine 106, glycine 137, and serine 139. Alanine 141 is an NADPH binding site. 5 residues coordinate sn-glycerol 3-phosphate: lysine 192, aspartate 245, serine 255, arginine 256, and asparagine 257. Lysine 192 acts as the Proton acceptor in catalysis. Arginine 256 is a binding site for NADPH. NADPH contacts are provided by valine 280 and glutamate 282.

Belongs to the NAD-dependent glycerol-3-phosphate dehydrogenase family.

Its subcellular location is the cytoplasm. The catalysed reaction is sn-glycerol 3-phosphate + NAD(+) = dihydroxyacetone phosphate + NADH + H(+). It catalyses the reaction sn-glycerol 3-phosphate + NADP(+) = dihydroxyacetone phosphate + NADPH + H(+). It participates in membrane lipid metabolism; glycerophospholipid metabolism. Catalyzes the reduction of the glycolytic intermediate dihydroxyacetone phosphate (DHAP) to sn-glycerol 3-phosphate (G3P), the key precursor for phospholipid synthesis. The chain is Glycerol-3-phosphate dehydrogenase [NAD(P)+] from Chlamydia trachomatis serovar L2 (strain ATCC VR-902B / DSM 19102 / 434/Bu).